A 653-amino-acid polypeptide reads, in one-letter code: Probable potassium transport system protein Kup (653 aa).

12 helical membrane-spanning segments follow: residues 37 to 57 (ALLALGALGIVYGDIGTSPLY), 79 to 99 (VLSLIFWSLIIVVSVKYLLLV), 134 to 154 (ITLGIFGAALLYGDGIITPAI), 168 to 188 (AVFDPYVIPIALVILVALFLV), 196 to 216 (IGAVFGPVMCIWFLTLAGLGV), 243 to 263 (LHGFLVLGGVFLVVTGCEALY), 278 to 298 (WFSMVLPALMLNYLGQGALLL), 320 to 340 (LVALATVAGVIASQALIAGVF), 368 to 388 (IYLPGLNWALLVGVVALVLGF), 397 to 417 (AYGIAVSTAMVITTLMAYVVA), 426 to 446 (WVAIPVVGLFLSVELAFFGAN), and 450 to 470 (VADGGWFPLLMAVVVFTLMTT).

The protein belongs to the HAK/KUP transporter (TC 2.A.72) family.

The protein localises to the cell inner membrane. It carries out the reaction K(+)(in) + H(+)(in) = K(+)(out) + H(+)(out). In terms of biological role, transport of potassium into the cell. Likely operates as a K(+):H(+) symporter. This Myxococcus xanthus (strain DK1622) protein is Probable potassium transport system protein Kup.